The following is a 72-amino-acid chain: Translation initiation factor IF-1 (72 aa).

Residues 1 to 72 (MSKTDVVEIE…TKGRIIWRDK (72 aa)) enclose the S1-like domain.

This sequence belongs to the IF-1 family. As to quaternary structure, component of the 30S ribosomal translation pre-initiation complex which assembles on the 30S ribosome in the order IF-2 and IF-3, IF-1 and N-formylmethionyl-tRNA(fMet); mRNA recruitment can occur at any time during PIC assembly.

It is found in the cytoplasm. In terms of biological role, one of the essential components for the initiation of protein synthesis. Stabilizes the binding of IF-2 and IF-3 on the 30S subunit to which N-formylmethionyl-tRNA(fMet) subsequently binds. Helps modulate mRNA selection, yielding the 30S pre-initiation complex (PIC). Upon addition of the 50S ribosomal subunit IF-1, IF-2 and IF-3 are released leaving the mature 70S translation initiation complex. This is Translation initiation factor IF-1 from Lachnoclostridium phytofermentans (strain ATCC 700394 / DSM 18823 / ISDg) (Clostridium phytofermentans).